The following is a 375-amino-acid chain: Trichodiene synthase (375 aa).

Belongs to the trichodiene synthase family.

It catalyses the reaction (2E,6E)-farnesyl diphosphate = trichodiene + diphosphate. The protein operates within sesquiterpene biosynthesis; trichothecene biosynthesis. TS is a member of the terpene cyclase group of enzymes. It catalyzes the isomerization and cyclization of farnesyl pyro-phosphate to form trichodiene, the first cyclic intermediate in the biosynthetic pathway for trichothecenes. It serves to branch trichothecene biosynthesis from the isoprenoid pathway. In Fusarium cerealis (Fusarium crookwellense), this protein is Trichodiene synthase (TRI5).